The primary structure comprises 378 residues: Probable protein phosphatase 2C 55 (378 aa).

Disordered stretches follow at residues 1–59 and 79–115; these read MRRH…ASKG and EGEA…GVGC. Positions 7-26 are enriched in low complexity; it reads LGLLRRAAASSTSAASSRAG. Over residues 92-104 the composition is skewed to basic residues; it reads GGRRGRNSKRQPP. Residues 122–369 enclose the PPM-type phosphatase domain; the sequence is SWGYSSFQGR…DNVTCIVLQF (248 aa). 4 residues coordinate Mn(2+): aspartate 158, glycine 159, aspartate 321, and aspartate 360.

It belongs to the PP2C family. The cofactor is Mg(2+). Mn(2+) serves as cofactor.

The catalysed reaction is O-phospho-L-seryl-[protein] + H2O = L-seryl-[protein] + phosphate. It carries out the reaction O-phospho-L-threonyl-[protein] + H2O = L-threonyl-[protein] + phosphate. The polypeptide is Probable protein phosphatase 2C 55 (Oryza sativa subsp. japonica (Rice)).